The primary structure comprises 365 residues: Phospho-N-acetylmuramoyl-pentapeptide-transferase (365 aa).

The next 9 membrane-spanning stretches (helical) occupy residues 19-39 (LLILLTVVLFLLMTLFQWLLT), 47-67 (AVILPVSVSAIACGLLGFGVI), 91-111 (AGTPTMGGIFFIPVAVGVALI), 115-135 (FDPQVVAVGIVTLAYMMIGWV), 155-175 (LLLQIAVAVLFCLWMLWTGSP), 184-204 (GNLIIPLGWLFWILAIFVLVA), 224-244 (AIAFLGLAAIVAPTSVGLMIF), 281-301 (AVGLLSGNLWGLFIISGIFFV), and 344-364 (TQIVGVFYLINAGLAILGFIS).

The protein belongs to the glycosyltransferase 4 family. MraY subfamily. The cofactor is Mg(2+).

The protein localises to the cell inner membrane. It catalyses the reaction UDP-N-acetyl-alpha-D-muramoyl-L-alanyl-gamma-D-glutamyl-meso-2,6-diaminopimeloyl-D-alanyl-D-alanine + di-trans,octa-cis-undecaprenyl phosphate = di-trans,octa-cis-undecaprenyl diphospho-N-acetyl-alpha-D-muramoyl-L-alanyl-D-glutamyl-meso-2,6-diaminopimeloyl-D-alanyl-D-alanine + UMP. Its pathway is cell wall biogenesis; peptidoglycan biosynthesis. Its function is as follows. Catalyzes the initial step of the lipid cycle reactions in the biosynthesis of the cell wall peptidoglycan: transfers peptidoglycan precursor phospho-MurNAc-pentapeptide from UDP-MurNAc-pentapeptide onto the lipid carrier undecaprenyl phosphate, yielding undecaprenyl-pyrophosphoryl-MurNAc-pentapeptide, known as lipid I. The protein is Phospho-N-acetylmuramoyl-pentapeptide-transferase of Gloeothece citriformis (strain PCC 7424) (Cyanothece sp. (strain PCC 7424)).